The primary structure comprises 493 residues: 3-ketoacyl-CoA synthase 16 (493 aa).

The signal sequence occupies residues 1-35; the sequence is MDYPMKKVKIFFNYLMAHRFKLCFLPLMVAIAVEA. The chain crosses the membrane as a helical span at residues 52–74; sequence NNHTSLTMFFLYLALGSTLYLMT. Positions 71–366 constitute an FAE domain; that stretch reads YLMTRPKPVY…FFVRFVKKKF (296 aa). Residues C221, H300, H384, H388, H417, and N421 contribute to the active site.

This sequence belongs to the thiolase-like superfamily. Chalcone/stilbene synthases family. Expressed in siliques.

It is found in the membrane. It carries out the reaction a very-long-chain acyl-CoA + malonyl-CoA + H(+) = a very-long-chain 3-oxoacyl-CoA + CO2 + CoA. Its pathway is lipid metabolism; fatty acid biosynthesis. The protein is 3-ketoacyl-CoA synthase 16 of Arabidopsis thaliana (Mouse-ear cress).